Reading from the N-terminus, the 1223-residue chain is Glycerophosphocholine phosphodiesterase GDE1 (1223 aa).

The SPX domain occupies 1-213; it reads MKFGKTFANH…GTNQQMSTMK (213 aa). Residues 43–59 are compositionally biased toward basic and acidic residues; that stretch reads HNKNSYDEGRPPTKMRD. The interval 43–64 is disordered; sequence HNKNSYDEGRPPTKMRDSSNSA. ANK repeat units follow at residues 427 to 456, 472 to 502, 504 to 533, 538 to 567, 572 to 601, and 605 to 634; these read YKRT…EWNI, ESLT…NVKL, SSSL…DINY, LHET…DLEI, FGWT…NFDI, and GGWT…LVTH. At Ser653 the chain carries Phosphoserine. Residues 872–1217 form the GP-PDE domain; it reads TRVIGHRGLG…DSVLAIRRGL (346 aa). Positions 911, 913, and 926 each coordinate a divalent metal cation. Ser983 carries the post-translational modification Phosphoserine.

The protein belongs to the GDE1 family. Requires a divalent metal cation as cofactor.

It is found in the cytoplasm. It carries out the reaction sn-glycerol 3-phosphocholine + H2O = sn-glycerol 3-phosphate + choline + H(+). The enzyme catalyses sn-glycero-3-phospho-1D-myo-inositol + H2O = myo-inositol + sn-glycerol 3-phosphate + H(+). In terms of biological role, glycerophosphocholine glycerophosphodiesterase responsible for the hydrolysis of intracellular glycerophosphocholine into glycerol-phosphate and choline. The choline is used for phosphatidyl-choline synthesis. Required for utilization of glycerophosphocholine as phosphate source. May also use glycerophosphoinositol as substrate in vivo. This Saccharomyces cerevisiae (strain ATCC 204508 / S288c) (Baker's yeast) protein is Glycerophosphocholine phosphodiesterase GDE1.